Consider the following 549-residue polypeptide: Siroheme synthase (549 aa).

The segment at 1-203 is precorrin-2 dehydrogenase /sirohydrochlorin ferrochelatase; it reads MNTFPLFFKL…GNENEALAQL (203 aa). Residues 22–23 and 43–44 contribute to the NAD(+) site; these read DV and PS. Serine 128 carries the phosphoserine modification. Residues 247 to 549 form a uroporphyrinogen-III C-methyltransferase region; it reads GEVYIVGAGP…DGDLEQLIIG (303 aa). Position 256 (proline 256) interacts with S-adenosyl-L-methionine. Aspartate 279 (proton acceptor) is an active-site residue. The active-site Proton donor is the lysine 301. S-adenosyl-L-methionine-binding positions include 332-334, isoleucine 337, 362-363, methionine 414, and alanine 443; these read GGD and TA.

The protein in the N-terminal section; belongs to the precorrin-2 dehydrogenase / sirohydrochlorin ferrochelatase family. This sequence in the C-terminal section; belongs to the precorrin methyltransferase family.

The catalysed reaction is uroporphyrinogen III + 2 S-adenosyl-L-methionine = precorrin-2 + 2 S-adenosyl-L-homocysteine + H(+). It catalyses the reaction precorrin-2 + NAD(+) = sirohydrochlorin + NADH + 2 H(+). The enzyme catalyses siroheme + 2 H(+) = sirohydrochlorin + Fe(2+). Its pathway is cofactor biosynthesis; adenosylcobalamin biosynthesis; precorrin-2 from uroporphyrinogen III: step 1/1. It participates in cofactor biosynthesis; adenosylcobalamin biosynthesis; sirohydrochlorin from precorrin-2: step 1/1. The protein operates within porphyrin-containing compound metabolism; siroheme biosynthesis; precorrin-2 from uroporphyrinogen III: step 1/1. It functions in the pathway porphyrin-containing compound metabolism; siroheme biosynthesis; siroheme from sirohydrochlorin: step 1/1. Its pathway is porphyrin-containing compound metabolism; siroheme biosynthesis; sirohydrochlorin from precorrin-2: step 1/1. In terms of biological role, multifunctional enzyme that catalyzes the SAM-dependent methylations of uroporphyrinogen III at position C-2 and C-7 to form precorrin-2 via precorrin-1. Then it catalyzes the NAD-dependent ring dehydrogenation of precorrin-2 to yield sirohydrochlorin. Finally, it catalyzes the ferrochelation of sirohydrochlorin to yield siroheme. The chain is Siroheme synthase from Psychrobacter arcticus (strain DSM 17307 / VKM B-2377 / 273-4).